The chain runs to 445 residues: POU domain, class 3, transcription factor 2 (445 aa).

Disordered stretches follow at residues 63–173, 203–269, 336–361, and 411–445; these read TALS…WRSA, LGAG…TPTS, EADS…KKRT, and EKRM…TPVQ. Gly residues predominate over residues 68 to 90; it reads GGSGGGGGGGGGGGGGGGGGGDG. The segment covering 125–151 has biased composition (low complexity); it reads QQQHQQQQQQQQQQQQQQQQQQQQQQQ. Basic and acidic residues predominate over residues 217-226; it reads LRDAHDEPHH. Over residues 227 to 237 the composition is skewed to basic residues; it reads ADHHPHPHSHP. The segment covering 239–253 has biased composition (pro residues); it reads QQPPPPPPPQGPPGH. Positions 264–338 constitute a POU-specific domain; the sequence is EDTPTSDDLE…LLNKWLEEAD (75 aa). Ser-343 is subject to Phosphoserine. The segment at residues 356-415 is a DNA-binding region (homeobox); sequence KRKKRTSIEVSVKGALESHFLKCPKPSAQEITSLADSLQLEKEVVRVWFCNRRQKEKRMT.

The protein belongs to the POU transcription factor family. Class-3 subfamily. Interacts with PQBP1. Interaction with ISL1. Expressed specifically at high levels in the brain.

It localises to the nucleus. Functionally, transcription factor that plays a key role in neuronal differentiation. Binds preferentially to the recognition sequence which consists of two distinct half-sites, ('GCAT') and ('TAAT'), separated by a non-conserved spacer region of 0, 2, or 3 nucleotides. Acts as a transcriptional activator when binding cooperatively with SOX4, SOX11, or SOX12 to gene promoters. The combination of three transcription factors, ASCL1, POU3F2/BRN2 and MYT1L, is sufficient to reprogram fibroblasts and other somatic cells into induced neuronal (iN) cells in vitro. Acts downstream of ASCL1, accessing chromatin that has been opened by ASCL1, and promotes transcription of neuronal genes. In Rattus norvegicus (Rat), this protein is POU domain, class 3, transcription factor 2 (Pou3f2).